The sequence spans 317 residues: SURF1-like protein (317 aa).

Transmembrane regions (helical) follow at residues 78–98 and 293–313; these read GSIL…WQIY and HMNY…MWIH.

Belongs to the SURF1 family.

It localises to the mitochondrion inner membrane. In terms of biological role, probably involved in the biogenesis of the COX complex. The sequence is that of SURF1-like protein (sft-1) from Caenorhabditis briggsae.